Here is a 642-residue protein sequence, read N- to C-terminus: UvrABC system protein C (642 aa).

The 78-residue stretch at E20 to I97 folds into the GIY-YIG domain. Residues K207–V242 form the UVR domain.

It belongs to the UvrC family. In terms of assembly, interacts with UvrB in an incision complex.

The protein resides in the cytoplasm. In terms of biological role, the UvrABC repair system catalyzes the recognition and processing of DNA lesions. UvrC both incises the 5' and 3' sides of the lesion. The N-terminal half is responsible for the 3' incision and the C-terminal half is responsible for the 5' incision. This Rickettsia felis (strain ATCC VR-1525 / URRWXCal2) (Rickettsia azadi) protein is UvrABC system protein C.